The sequence spans 351 residues: Autoinducer 2 import system permease protein LsrC (351 aa).

The next 9 helical transmembrane spans lie at L14–L34, M39–L59, I70–A90, L93–L113, I115–L135, I155–W175, M213–P233, G252–L272, and L284–D304.

This sequence belongs to the binding-protein-dependent transport system permease family. AraH/RbsC subfamily. The complex is composed of two ATP-binding proteins (LsrA), two transmembrane proteins (LsrC and LsrD) and a solute-binding protein (LsrB).

It is found in the cell inner membrane. Part of the ABC transporter complex LsrABCD involved in autoinducer 2 (AI-2) import. Probably responsible for the translocation of the substrate across the membrane. The protein is Autoinducer 2 import system permease protein LsrC (lsrC) of Yersinia pseudotuberculosis serotype O:1b (strain IP 31758).